We begin with the raw amino-acid sequence, 729 residues long: Fatty acid oxidation complex subunit alpha (729 aa).

Positions 1-189 (MLYKGDTLYL…KIGLVDGVVK (189 aa)) are enoyl-CoA hydratase/isomerase. Asp-296 contributes to the substrate binding site. The interval 311-729 (ETPKQAAVLG…ARLVGDLKTA (419 aa)) is 3-hydroxyacyl-CoA dehydrogenase. NAD(+) is bound by residues Met-324, Asp-343, 400 to 402 (VVE), Lys-407, and Ser-429. The For 3-hydroxyacyl-CoA dehydrogenase activity role is filled by His-450. Residue Asn-453 coordinates NAD(+). 2 residues coordinate substrate: Asn-500 and Tyr-660.

It in the N-terminal section; belongs to the enoyl-CoA hydratase/isomerase family. The protein in the C-terminal section; belongs to the 3-hydroxyacyl-CoA dehydrogenase family. In terms of assembly, heterotetramer of two alpha chains (FadB) and two beta chains (FadA).

The catalysed reaction is a (3S)-3-hydroxyacyl-CoA + NAD(+) = a 3-oxoacyl-CoA + NADH + H(+). It carries out the reaction a (3S)-3-hydroxyacyl-CoA = a (2E)-enoyl-CoA + H2O. The enzyme catalyses a 4-saturated-(3S)-3-hydroxyacyl-CoA = a (3E)-enoyl-CoA + H2O. It catalyses the reaction (3S)-3-hydroxybutanoyl-CoA = (3R)-3-hydroxybutanoyl-CoA. The catalysed reaction is a (3Z)-enoyl-CoA = a 4-saturated (2E)-enoyl-CoA. It carries out the reaction a (3E)-enoyl-CoA = a 4-saturated (2E)-enoyl-CoA. It participates in lipid metabolism; fatty acid beta-oxidation. Functionally, involved in the aerobic and anaerobic degradation of long-chain fatty acids via beta-oxidation cycle. Catalyzes the formation of 3-oxoacyl-CoA from enoyl-CoA via L-3-hydroxyacyl-CoA. It can also use D-3-hydroxyacyl-CoA and cis-3-enoyl-CoA as substrate. The protein is Fatty acid oxidation complex subunit alpha of Escherichia coli (strain SE11).